A 541-amino-acid polypeptide reads, in one-letter code: 2-succinyl-5-enolpyruvyl-6-hydroxy-3-cyclohexene-1-carboxylate synthase (541 aa).

It belongs to the TPP enzyme family. MenD subfamily. As to quaternary structure, homodimer. Mg(2+) serves as cofactor. Mn(2+) is required as a cofactor. The cofactor is thiamine diphosphate.

The enzyme catalyses isochorismate + 2-oxoglutarate + H(+) = 5-enolpyruvoyl-6-hydroxy-2-succinyl-cyclohex-3-ene-1-carboxylate + CO2. It participates in quinol/quinone metabolism; 1,4-dihydroxy-2-naphthoate biosynthesis; 1,4-dihydroxy-2-naphthoate from chorismate: step 2/7. The protein operates within quinol/quinone metabolism; menaquinone biosynthesis. Catalyzes the thiamine diphosphate-dependent decarboxylation of 2-oxoglutarate and the subsequent addition of the resulting succinic semialdehyde-thiamine pyrophosphate anion to isochorismate to yield 2-succinyl-5-enolpyruvyl-6-hydroxy-3-cyclohexene-1-carboxylate (SEPHCHC). In Rhodococcus opacus (strain B4), this protein is 2-succinyl-5-enolpyruvyl-6-hydroxy-3-cyclohexene-1-carboxylate synthase.